Consider the following 452-residue polypeptide: UDP-N-acetylmuramoylalanine--D-glutamate ligase (452 aa).

Gly119–Thr125 contacts ATP.

This sequence belongs to the MurCDEF family.

It localises to the cytoplasm. It carries out the reaction UDP-N-acetyl-alpha-D-muramoyl-L-alanine + D-glutamate + ATP = UDP-N-acetyl-alpha-D-muramoyl-L-alanyl-D-glutamate + ADP + phosphate + H(+). The protein operates within cell wall biogenesis; peptidoglycan biosynthesis. Cell wall formation. Catalyzes the addition of glutamate to the nucleotide precursor UDP-N-acetylmuramoyl-L-alanine (UMA). This is UDP-N-acetylmuramoylalanine--D-glutamate ligase (murD) from Streptococcus pyogenes serotype M1.